The following is a 362-amino-acid chain: Formyltransferase/hydrolase complex Fhc subunit B (362 aa).

As to quaternary structure, octaheteromer. Part of the formyltransferase/hydrolase complex fhc; composed of FhcA, FhcB, FhcC and FhcD.

The protein resides in the cytoplasm. The protein operates within one-carbon metabolism; formaldehyde degradation; formate from formaldehyde (H(4)MPT route): step 4/5. Its function is as follows. Involved in the transformation of 5-formyl tetrahydromethanopterin (5-formyl-H(4)MPT) to methanofuran (MFR) and formate via the formylmethanofuran (formyl-MFR). This chain is Formyltransferase/hydrolase complex Fhc subunit B (fhcB), found in Methylorubrum extorquens (strain ATCC 14718 / DSM 1338 / JCM 2805 / NCIMB 9133 / AM1) (Methylobacterium extorquens).